Here is a 369-residue protein sequence, read N- to C-terminus: Opsin Rh6 (369 aa).

Topologically, residues Met1 to Trp46 are extracellular. A glycan (N-linked (GlcNAc...) asparagine) is linked at Asn17. Residues Phe47–Ile71 form a helical membrane-spanning segment. At Phe72–Asn83 the chain is on the cytoplasmic side. A helical membrane pass occupies residues Met84–Phe109. At Tyr110–Tyr123 the chain is on the extracellular side. A disulfide bridge connects residues Cys120 and Cys197. The helical transmembrane segment at Gly124–Tyr143 threads the bilayer. The Cytoplasmic segment spans residues Asp144–Ala162. The chain crosses the membrane as a helical span at residues Ala163–Asn186. The Extracellular segment spans residues Arg187 to Ser210. Residues Asn193 and Asn208 are each glycosylated (N-linked (GlcNAc...) asparagine). Residues Tyr211 to Val238 traverse the membrane as a helical segment. Topologically, residues Ala239–Lys274 are cytoplasmic. The chain crosses the membrane as a helical span at residues Val275–Ile298. At Phe299–Ser305 the chain is on the extracellular side. A helical membrane pass occupies residues Pro306–Ser330. An N6-(retinylidene)lysine modification is found at Lys317. The Cytoplasmic segment spans residues His331–Ala369.

This sequence belongs to the G-protein coupled receptor 1 family. Opsin subfamily. Phosphorylated on some or all of the serine and threonine residues present in the C-terminal region. As to expression, each Drosophila eye is composed of 800 facets or ommatidia. Each ommatidium contains 8 photoreceptor cells (R1-R8), the R1 to R6 cells are outer cells, while R7 and R8 are inner cells. Rh6 is expressed in a subset of R8 cells, most likely expressed in the subset of R8 cells paired with Rh4-expressing R7 cells (R7y).

The protein localises to the membrane. Its function is as follows. Visual pigments are the light-absorbing molecules that mediate vision. They consist of an apoprotein, opsin, covalently linked to cis-retinal. In Drosophila melanogaster (Fruit fly), this protein is Opsin Rh6 (Rh6).